A 487-amino-acid chain; its full sequence is MGAAENNLEMEGTLEIGMEYRTVSGVAGPLVILEKVKGPKYQEIVNIRLGDGTTRRGQVLEVDGEKAVVQVFEGTSGIDNKYTTVQFTGEVLKTPVSLDMLGRIFNGSGKPIDNGPPILPEAYLDISGSSINPSERTYPEEMIQTGISTIDVMNSIARGQKIPLFSAAGLPHNEIAAQICRQAGLVKRLEKSDNLLEHQEDDNFAIVFAAMGVNMETAQFFKRDFEENGSMERVTLFLNLANDPTIERIITPRIALTTAEYLAYECGKHVLVILTDMSSYADALREVSAAREEVPGRRGYPGYMYTDLATIYERAGRIEGRKGSITQIPILTMPNDDITHPTPDLTGYITEGQIYIDRQLHNRQIYPPINVLPSLSRLMKSAIGEGMTRRDHSDVSNQLYANYAIGKDVQAMKAVVGEEALSSEDLLYLEFLDKFERKFVAQGAYDTRNIFQSLDLAWTLLRIFPRELLHRIPAKTLDQFYSRDTTN.

N-acetylglycine is present on Gly2.

Belongs to the ATPase alpha/beta chains family. V-ATPase is a heteromultimeric enzyme composed of a peripheral catalytic V1 complex (components A to H) attached to an integral membrane V0 proton pore complex (components: a, c, c'', d and e).

It is found in the vacuole membrane. Non-catalytic subunit of the peripheral V1 complex of vacuolar ATPase. V-ATPase is responsible for acidifying a variety of intracellular compartments in eukaryotic cells. The polypeptide is V-type proton ATPase subunit B2 (VHA-B2) (Arabidopsis thaliana (Mouse-ear cress)).